The chain runs to 111 residues: Auxin-repressed 12.5 kDa protein (111 aa).

A disordered region spans residues 18–111 (ERGLGMLRKV…SGETRSKHHR (94 aa)). The segment covering 43-57 (TMPTTPTTPVTPTTP) has biased composition (low complexity). Residues 74–95 (SNLSSKTMGNQVFDSPQPNSPT) show a composition bias toward polar residues.

The protein belongs to the DRM1/ARP family.

In Fragaria ananassa (Strawberry), this protein is Auxin-repressed 12.5 kDa protein.